The sequence spans 368 residues: C2H2 type master regulator of conidiophore development BrlA (368 aa).

The C2H2-type 1; degenerate zinc-finger motif lies at 268 to 292 (CKCDYPGCHKAFRRNEHLKRHKQTF). The segment at 300-323 (FSCEFCGKDQFNRQDNLNNHRKLH) adopts a C2H2-type 2 zinc-finger fold. The disordered stretch occupies residues 338 to 368 (AAVPIIEQEERSRKRRAPPKSKSADKRVDDY). Residues 359 to 368 (KSADKRVDDY) are compositionally biased toward basic and acidic residues.

The protein resides in the nucleus. Its function is as follows. BrlA, abaA and wetA are pivotal regulators of conidiophore development and conidium maturation. They act individually and together to regulate their own expression and that of numerous other sporulation-specific genes. BrlA, abaA and wetA act together to positively regulate the expression of the Pks1 gene cluster that mediates the biosynthesis of an anthraquinone derivative pigment that contributes to conidial pigmentation that provides protection from UV radiation, heat and cold stress. The protein is C2H2 type master regulator of conidiophore development BrlA of Metarhizium robertsii (strain ARSEF 23 / ATCC MYA-3075) (Metarhizium anisopliae (strain ARSEF 23)).